The following is a 103-amino-acid chain: Histone H4 (103 aa).

The segment covering M1–G14 has biased composition (gly residues). The disordered stretch occupies residues M1 to R20. S2 carries the N-acetylserine modification. K17 is subject to N6-acetyllysine. A DNA-binding region spans residues K17–R21. K80 is modified (N6-methylated lysine).

Belongs to the histone H4 family. As to quaternary structure, the nucleosome is a histone octamer containing two molecules each of H2A, H2B, H3 and H4 assembled in one H3-H4 heterotetramer and two H2A-H2B heterodimers. The octamer wraps approximately 147 bp of DNA.

It localises to the nucleus. It is found in the chromosome. Its function is as follows. Core component of nucleosome. Nucleosomes wrap and compact DNA into chromatin, limiting DNA accessibility to the cellular machineries which require DNA as a template. Histones thereby play a central role in transcription regulation, DNA repair, DNA replication and chromosomal stability. DNA accessibility is regulated via a complex set of post-translational modifications of histones, also called histone code, and nucleosome remodeling. This Olisthodiscus luteus (Marine phytoflagellate) protein is Histone H4.